The chain runs to 390 residues: Transforming growth factor beta-1 proprotein (390 aa).

The N-terminal stretch at 1-29 (MPPSGLRLLPLLLPLLWLLVLTPSRPAAG) is a signal peptide. The straightjacket domain stretch occupies residues 30 to 74 (LSTCKTIDMELVKRKRIETIRGQILSKLRLASPPSQGEVPPGPLP). An arm domain region spans residues 75–271 (EAVLALYNST…ATPLERAQHL (197 aa)). Asn-82, Asn-136, and Asn-176 each carry an N-linked (GlcNAc...) asparagine glycan. Residues 226–252 (DSKDNTLQVDINGFTTGRRGDLATIHG) form a bowtie tail region. Positions 244 to 246 (RGD) match the Cell attachment site motif. Intrachain disulfides connect Cys-285/Cys-294, Cys-293/Cys-356, Cys-322/Cys-387, and Cys-326/Cys-389.

It belongs to the TGF-beta family. In terms of assembly, homodimer; disulfide-linked. Interacts with the serine proteases, HTRA1 and HTRA3: the interaction with either inhibits TGFB1-mediated signaling and the HTRA protease activity is required for this inhibition. May interact with THSD4; this interaction may lead to sequestration by FBN1 microfibril assembly and attenuation of TGFB signaling. Interacts with CD109, DPT and ASPN. Interacts with EFEMP2. Interacts with TSKU; the interaction contributes to regulation of the hair cycle. Interacts with TGFBR3. As to quaternary structure, homodimer; disulfide-linked. Interacts with transforming growth factor beta-1 (TGF-beta-1) chain; interaction is non-covalent and maintains TGF-beta-1 in a latent state; each latency-associated peptide (LAP) monomer interacts with TGF-beta-1 in the other monomer. Interacts with LTBP1; leading to regulation of TGF-beta-1 activation. Interacts with LRRC32/GARP; leading to regulation of TGF-beta-1 activation on the surface of activated regulatory T-cells (Tregs). Interacts with LRRC33/NRROS; leading to regulation of TGF-beta-1 activation in macrophages and microglia. Interacts (via cell attachment site) with integrins ITGAV and ITGB6 (ITGAV:ITGB6), leading to release of the active TGF-beta-1. Interacts with NREP; the interaction results in a decrease in TGFB1 autoinduction. Interacts with HSP90AB1; inhibits latent TGFB1 activation. Homodimer; disulfide-linked. Interacts with TGF-beta receptors (TGFBR1 and TGFBR2), leading to signal transduction. Post-translationally, transforming growth factor beta-1 proprotein: The precursor proprotein is cleaved in the Golgi apparatus by FURIN to form Transforming growth factor beta-1 (TGF-beta-1) and Latency-associated peptide (LAP) chains, which remain non-covalently linked, rendering TGF-beta-1 inactive. In terms of processing, N-glycosylated. Deglycosylation leads to activation of Transforming growth factor beta-1 (TGF-beta-1); mechanisms triggering deglycosylation-driven activation of TGF-beta-1 are however unclear.

It is found in the secreted. The protein resides in the extracellular space. The protein localises to the extracellular matrix. In terms of biological role, transforming growth factor beta-1 proprotein: Precursor of the Latency-associated peptide (LAP) and Transforming growth factor beta-1 (TGF-beta-1) chains, which constitute the regulatory and active subunit of TGF-beta-1, respectively. Required to maintain the Transforming growth factor beta-1 (TGF-beta-1) chain in a latent state during storage in extracellular matrix. Associates non-covalently with TGF-beta-1 and regulates its activation via interaction with 'milieu molecules', such as LTBP1, LRRC32/GARP and LRRC33/NRROS, that control activation of TGF-beta-1. Interaction with LRRC33/NRROS regulates activation of TGF-beta-1 in macrophages and microglia. Interaction with LRRC32/GARP controls activation of TGF-beta-1 on the surface of activated regulatory T-cells (Tregs). Interaction with integrins (ITGAV:ITGB6 or ITGAV:ITGB8) results in distortion of the Latency-associated peptide chain and subsequent release of the active TGF-beta-1. Functionally, multifunctional protein that regulates the growth and differentiation of various cell types and is involved in various processes, such as normal development, immune function, microglia function and responses to neurodegeneration. Activation into mature form follows different steps: following cleavage of the proprotein in the Golgi apparatus, Latency-associated peptide (LAP) and Transforming growth factor beta-1 (TGF-beta-1) chains remain non-covalently linked rendering TGF-beta-1 inactive during storage in extracellular matrix. At the same time, LAP chain interacts with 'milieu molecules', such as LTBP1, LRRC32/GARP and LRRC33/NRROS that control activation of TGF-beta-1 and maintain it in a latent state during storage in extracellular milieus. TGF-beta-1 is released from LAP by integrins (ITGAV:ITGB6 or ITGAV:ITGB8): integrin-binding to LAP stabilizes an alternative conformation of the LAP bowtie tail and results in distortion of the LAP chain and subsequent release of the active TGF-beta-1. Once activated following release of LAP, TGF-beta-1 acts by binding to TGF-beta receptors (TGFBR1 and TGFBR2), which transduce signal. While expressed by many cells types, TGF-beta-1 only has a very localized range of action within cell environment thanks to fine regulation of its activation by Latency-associated peptide chain (LAP) and 'milieu molecules'. Plays an important role in bone remodeling: acts as a potent stimulator of osteoblastic bone formation, causing chemotaxis, proliferation and differentiation in committed osteoblasts. Can promote either T-helper 17 cells (Th17) or regulatory T-cells (Treg) lineage differentiation in a concentration-dependent manner. At high concentrations, leads to FOXP3-mediated suppression of RORC and down-regulation of IL-17 expression, favoring Treg cell development. At low concentrations in concert with IL-6 and IL-21, leads to expression of the IL-17 and IL-23 receptors, favoring differentiation to Th17 cells. Stimulates sustained production of collagen through the activation of CREB3L1 by regulated intramembrane proteolysis (RIP). Mediates SMAD2/3 activation by inducing its phosphorylation and subsequent translocation to the nucleus. Positively regulates odontoblastic differentiation in dental papilla cells, via promotion of IPO7-mediated translocation of phosphorylated SMAD2 to the nucleus and subsequent transcription of target genes. Can induce epithelial-to-mesenchymal transition (EMT) and cell migration in various cell types. In Chlorocebus aethiops (Green monkey), this protein is Transforming growth factor beta-1 proprotein (TGFB1).